Reading from the N-terminus, the 248-residue chain is 3-deoxy-manno-octulosonate cytidylyltransferase (248 aa).

Belongs to the KdsB family.

The protein resides in the cytoplasm. The enzyme catalyses 3-deoxy-alpha-D-manno-oct-2-ulosonate + CTP = CMP-3-deoxy-beta-D-manno-octulosonate + diphosphate. It participates in nucleotide-sugar biosynthesis; CMP-3-deoxy-D-manno-octulosonate biosynthesis; CMP-3-deoxy-D-manno-octulosonate from 3-deoxy-D-manno-octulosonate and CTP: step 1/1. It functions in the pathway bacterial outer membrane biogenesis; lipopolysaccharide biosynthesis. In terms of biological role, activates KDO (a required 8-carbon sugar) for incorporation into bacterial lipopolysaccharide in Gram-negative bacteria. This is 3-deoxy-manno-octulosonate cytidylyltransferase from Salmonella paratyphi A (strain ATCC 9150 / SARB42).